The chain runs to 249 residues: RING finger protein 223 (249 aa).

Positions 1–44 (MSSGQQVWHTAVPPPRRSSSIASMPRSPSSAGSPRSPGTPGSER) are disordered. Residues 17-44 (RSSSIASMPRSPSSAGSPRSPGTPGSER) show a composition bias toward low complexity. The RING-type zinc finger occupies 51 to 102 (CSICFSGYDNIFKTPKELSCTHVFCLECLARLAAAQPVGRPGGEAVPCPFCR). The chain crosses the membrane as a helical span at residues 199–219 (LVSALLLMLFCVALWPVQCAL). Residues 230–249 (PPRPPATSTAASPLGPLTDN) are disordered. Positions 235–249 (ATSTAASPLGPLTDN) are enriched in low complexity.

Its subcellular location is the membrane. The protein is RING finger protein 223 (RNF223) of Homo sapiens (Human).